The primary structure comprises 125 residues: Small ribosomal subunit protein uS12c (125 aa).

The protein belongs to the universal ribosomal protein uS12 family. In terms of assembly, part of the 30S ribosomal subunit.

The protein localises to the plastid. It is found in the chloroplast. Functionally, with S4 and S5 plays an important role in translational accuracy. Located at the interface of the 30S and 50S subunits. This is Small ribosomal subunit protein uS12c (rps12) from Oltmannsiellopsis viridis (Marine flagellate).